The primary structure comprises 414 residues: Eukaryotic initiation factor 4A-1 (414 aa).

The Q motif motif lies at 41–69; sequence ESFDDMGLQENLLRGIYAYGFEKPSAIQQ. The region spanning 72–242 is the Helicase ATP-binding domain; it reads IVPFCKGLDV…RKFMNKPVRI (171 aa). Residue 85–92 coordinates ATP; that stretch reads AQSGTGKT. Residues 190–193 carry the DEAD box motif; it reads DEAD. The region spanning 253–414 is the Helicase C-terminal domain; that stretch reads GIKQFYVNVE…ELPANVADLL (162 aa).

It belongs to the DEAD box helicase family. eIF4A subfamily. In terms of assembly, eIF4F is a multi-subunit complex, the composition of which varies with external and internal environmental conditions. It is composed of at least EIF4A, EIF4E and EIF4G.

The catalysed reaction is ATP + H2O = ADP + phosphate + H(+). In terms of biological role, ATP-dependent RNA helicase which is a subunit of the eIF4F complex involved in cap recognition and is required for mRNA binding to ribosome. In the current model of translation initiation, eIF4A unwinds RNA secondary structures in the 5'-UTR of mRNAs which is necessary to allow efficient binding of the small ribosomal subunit, and subsequent scanning for the initiator codon. This chain is Eukaryotic initiation factor 4A-1, found in Oryza sativa subsp. japonica (Rice).